A 528-amino-acid polypeptide reads, in one-letter code: GMP synthase [glutamine-hydrolyzing] (528 aa).

Positions 13–204 (SILILDFGSQ…VYSIAKCKAD (192 aa)) constitute a Glutamine amidotransferase type-1 domain. Cys-90 (nucleophile) is an active-site residue. Active-site residues include His-178 and Glu-180. A GMPS ATP-PPase domain is found at 205–403 (WTTETFLEET…LGLPDEIIKR (199 aa)). Residue 232-238 (SGGVDSS) participates in ATP binding.

In terms of assembly, homodimer.

The catalysed reaction is XMP + L-glutamine + ATP + H2O = GMP + L-glutamate + AMP + diphosphate + 2 H(+). It functions in the pathway purine metabolism; GMP biosynthesis; GMP from XMP (L-Gln route): step 1/1. In terms of biological role, catalyzes the synthesis of GMP from XMP. The polypeptide is GMP synthase [glutamine-hydrolyzing] (Prochlorococcus marinus subsp. pastoris (strain CCMP1986 / NIES-2087 / MED4)).